A 180-amino-acid chain; its full sequence is Adenine phosphoribosyltransferase (180 aa).

The protein belongs to the purine/pyrimidine phosphoribosyltransferase family. As to quaternary structure, homodimer.

Its subcellular location is the cytoplasm. The enzyme catalyses AMP + diphosphate = 5-phospho-alpha-D-ribose 1-diphosphate + adenine. It participates in purine metabolism; AMP biosynthesis via salvage pathway; AMP from adenine: step 1/1. Functionally, catalyzes a salvage reaction resulting in the formation of AMP, that is energically less costly than de novo synthesis. The polypeptide is Adenine phosphoribosyltransferase (Rhizobium meliloti (strain 1021) (Ensifer meliloti)).